Consider the following 138-residue polypeptide: Histone H3 (138 aa).

The segment at 1 to 49 (MARTKQTARKSTGGKAPRKQLATKAARKQAPSQVSGGVKKPHRYRPGTV) is disordered. Lys5 is subject to N6,N6,N6-trimethyllysine; alternate. An N6,N6-dimethyllysine; alternate modification is found at Lys5. 2 positions are modified to N6-methyllysine; alternate: Lys5 and Lys10. Lys10 carries the N6-acetyllysine; alternate modification. Ser11 carries the phosphoserine modification. The residue at position 15 (Lys15) is an N6,N6-dimethyllysine; alternate. An N6-methyllysine; alternate mark is found at Lys15, Lys19, Lys24, Lys28, and Lys39. An N6-acetyllysine; alternate mark is found at Lys15, Lys19, Lys24, Lys28, and Lys39. 2 positions are modified to N6,N6,N6-trimethyllysine; alternate: Lys28 and Lys39. Residues Lys28 and Lys39 each carry the N6,N6-dimethyllysine; alternate modification. Lys59 and Lys67 each carry N6-acetyllysine. Residue Lys82 is modified to N6,N6,N6-trimethyllysine; alternate. Lys82 is subject to N6,N6-dimethyllysine; alternate. N6-methyllysine; alternate is present on Lys82.

This sequence belongs to the histone H3 family. In terms of assembly, the nucleosome is a histone octamer containing two molecules each of H2A, H2B, H3 and H4 assembled in one H3-H4 heterotetramer and two H2A-H2B heterodimers. The octamer wraps approximately 147 bp of DNA. Phosphorylated to form H3S10ph. H3S10ph promotes subsequent H3K14ac formation and is required for transcriptional activation through TBP recruitment to the promoters. Post-translationally, mono-, di- and trimethylated by the COMPASS complex to form H3K4me1/2/3. H3K4me activates gene expression by regulating transcription elongation and plays a role in telomere length maintenance. H3K4me enrichment correlates with transcription levels, and occurs in a 5' to 3' gradient with H3K4me3 enrichment at the 5'-end of genes, shifting to H3K4me2 and then H3K4me1. Methylated by SET2 to form H3K36me. H3K36me represses gene expression. Methylated by DOT1 to form H3K79me. H3K79me is required for association of SIR proteins with telomeric regions and for telomeric silencing. The COMPASS-mediated formation of H3K4me2/3 and the DOT1-mediated formation of H3K79me require H2BK123ub1. In terms of processing, acetylation of histone H3 leads to transcriptional activation. H3K14ac formation by GCN5 is promoted by H3S10ph. H3K14ac can also be formed by ESA1. H3K56ac formation occurs predominantly in newly synthesized H3 molecules during G1, S and G2/M of the cell cycle and may be involved in DNA repair.

It is found in the nucleus. Its subcellular location is the chromosome. Its function is as follows. Core component of nucleosome. Nucleosomes wrap and compact DNA into chromatin, limiting DNA accessibility to the cellular machineries which require DNA as a template. Histones thereby play a central role in transcription regulation, DNA repair, DNA replication and chromosomal stability. DNA accessibility is regulated via a complex set of post-translational modifications of histones, also called histone code, and nucleosome remodeling. This is Histone H3 (HHT1) from Cryptococcus neoformans var. neoformans serotype D (strain B-3501A) (Filobasidiella neoformans).